A 1136-amino-acid chain; its full sequence is Carbamoyl phosphate synthase large chain (1136 aa).

A carboxyphosphate synthetic domain region spans residues 1-402 (MPKRTDIKSV…SLGKAMRSID (402 aa)). ATP contacts are provided by Arg129, Arg169, Gly175, Gly176, Glu208, Ile210, Glu215, Gly241, Val242, His243, Gln285, and Glu299. In terms of domain architecture, ATP-grasp 1 spans 133 to 328 (KKVVKEAGAE…IAKIATKLAL (196 aa)). Mg(2+)-binding residues include Gln285, Glu299, and Asn301. Gln285, Glu299, and Asn301 together coordinate Mn(2+). The segment at 403-551 (KRHMGFSWDG…YYYSCYADET (149 aa)) is oligomerization domain. The interval 552–962 (ELRKREREAV…AFAKSQLASY (411 aa)) is carbamoyl phosphate synthetic domain. Positions 681 to 881 (GEVLRQEHLN…LAKAAARIMA (201 aa)) constitute an ATP-grasp 2 domain. 10 residues coordinate ATP: Arg717, Lys765, Leu767, Glu772, Gly797, Val798, His799, Ser800, Gln840, and Glu852. Residues Gln840, Glu852, and Asn854 each coordinate Mg(2+). 3 residues coordinate Mn(2+): Gln840, Glu852, and Asn854. An allosteric domain region spans residues 963 to 1136 (EGGLPTNGNV…KEEGEEARAQ (174 aa)). In terms of domain architecture, MGS-like spans 964–1122 (GGLPTNGNVF…QEHSRELYEL (159 aa)).

Belongs to the CarB family. In terms of assembly, composed of two chains; the small (or glutamine) chain promotes the hydrolysis of glutamine to ammonia, which is used by the large (or ammonia) chain to synthesize carbamoyl phosphate. Tetramer of heterodimers (alpha,beta)4. It depends on Mg(2+) as a cofactor. Mn(2+) is required as a cofactor.

It catalyses the reaction hydrogencarbonate + L-glutamine + 2 ATP + H2O = carbamoyl phosphate + L-glutamate + 2 ADP + phosphate + 2 H(+). The catalysed reaction is hydrogencarbonate + NH4(+) + 2 ATP = carbamoyl phosphate + 2 ADP + phosphate + 2 H(+). It functions in the pathway amino-acid biosynthesis; L-arginine biosynthesis; carbamoyl phosphate from bicarbonate: step 1/1. The protein operates within pyrimidine metabolism; UMP biosynthesis via de novo pathway; (S)-dihydroorotate from bicarbonate: step 1/3. In terms of biological role, large subunit of the glutamine-dependent carbamoyl phosphate synthetase (CPSase). CPSase catalyzes the formation of carbamoyl phosphate from the ammonia moiety of glutamine, carbonate, and phosphate donated by ATP, constituting the first step of 2 biosynthetic pathways, one leading to arginine and/or urea and the other to pyrimidine nucleotides. The large subunit (synthetase) binds the substrates ammonia (free or transferred from glutamine from the small subunit), hydrogencarbonate and ATP and carries out an ATP-coupled ligase reaction, activating hydrogencarbonate by forming carboxy phosphate which reacts with ammonia to form carbamoyl phosphate. The chain is Carbamoyl phosphate synthase large chain from Bifidobacterium animalis subsp. lactis (strain AD011).